The sequence spans 501 residues: Probable cytosol aminopeptidase (501 aa).

Mn(2+) contacts are provided by K270 and D275. K282 is an active-site residue. The Mn(2+) site is built by D293, D352, and E354. R356 is an active-site residue.

This sequence belongs to the peptidase M17 family. Mn(2+) is required as a cofactor.

It is found in the cytoplasm. The enzyme catalyses Release of an N-terminal amino acid, Xaa-|-Yaa-, in which Xaa is preferably Leu, but may be other amino acids including Pro although not Arg or Lys, and Yaa may be Pro. Amino acid amides and methyl esters are also readily hydrolyzed, but rates on arylamides are exceedingly low.. It carries out the reaction Release of an N-terminal amino acid, preferentially leucine, but not glutamic or aspartic acids.. Presumably involved in the processing and regular turnover of intracellular proteins. Catalyzes the removal of unsubstituted N-terminal amino acids from various peptides. The polypeptide is Probable cytosol aminopeptidase (Wigglesworthia glossinidia brevipalpis).